Reading from the N-terminus, the 1234-residue chain is Formin-like protein 3 (1234 aa).

The 208-residue stretch at 1–208 (MRLDSFPASI…QYVARRNISP (208 aa)) folds into the Phosphatase tensin-type domain. C141 functions as the Phosphocysteine intermediate in the catalytic mechanism. Positions 214-352 (ERALSFDCLI…FRAEMLFCEL (139 aa)) constitute a C2 tensin-type domain. Disordered stretches follow at residues 443–478 (DSDE…NINH) and 492–840 (LVNT…LKPL). Positions 498-507 (VLPPTTPPPC) are enriched in pro residues. The segment covering 524–534 (VQHESPSDRKL) has biased composition (basic and acidic residues). Pro residues-rich tracts occupy residues 536-576 (SPSP…PPLP), 584-656 (QPPP…PPAP), 663-673 (PAPPPPPPPPR), 688-699 (GPPPPPPPPLPP), 709-721 (PSAP…PPPA), 729-739 (APAPPLPPPLP), and 762-784 (PAPP…PPPL). The FH2 domain occupies 827 to 1226 (QQSNPPKKAS…KLEKDKEKAT (400 aa)).

It belongs to the formin-like family. Class-II subfamily.

The polypeptide is Formin-like protein 3 (FH3) (Oryza sativa subsp. japonica (Rice)).